Reading from the N-terminus, the 621-residue chain is CEP295 N-terminal-like protein (621 aa).

The tract at residues Gly-142–Ser-253 is disordered. The span at Arg-159–His-170 shows a compositional bias: basic residues. Residues Arg-171 to Gly-185 are compositionally biased toward basic and acidic residues. Residues Lys-203–Met-213 are compositionally biased toward polar residues. The span at Pro-219–Pro-229 shows a compositional bias: basic and acidic residues. Residues Gln-328–Leu-359 are a coiled coil. Disordered stretches follow at residues Cys-385–Thr-421, Asp-491–Ser-529, and Arg-543–Ser-586. Positions Ser-498–His-525 form a coiled coil. The span at Gln-505 to Ser-529 shows a compositional bias: basic and acidic residues. Residues Glu-568–Ser-578 show a composition bias toward polar residues.

It is found in the cell projection. The protein localises to the cilium. This Homo sapiens (Human) protein is CEP295 N-terminal-like protein.